A 275-amino-acid polypeptide reads, in one-letter code: NH(3)-dependent NAD(+) synthetase (275 aa).

Residue 46 to 53 participates in ATP binding; sequence GISGGQDS. A Mg(2+)-binding site is contributed by aspartate 52. Arginine 140 contacts deamido-NAD(+). Threonine 160 serves as a coordination point for ATP. Glutamate 165 provides a ligand contact to Mg(2+). Deamido-NAD(+) contacts are provided by lysine 173 and aspartate 180. The ATP site is built by lysine 189 and threonine 211. A deamido-NAD(+)-binding site is contributed by 260–261; the sequence is HK.

Belongs to the NAD synthetase family. Homodimer.

It catalyses the reaction deamido-NAD(+) + NH4(+) + ATP = AMP + diphosphate + NAD(+) + H(+). It functions in the pathway cofactor biosynthesis; NAD(+) biosynthesis; NAD(+) from deamido-NAD(+) (ammonia route): step 1/1. Its function is as follows. Catalyzes the ATP-dependent amidation of deamido-NAD to form NAD. Uses ammonia as a nitrogen source. This Salmonella paratyphi A (strain ATCC 9150 / SARB42) protein is NH(3)-dependent NAD(+) synthetase.